The following is a 271-amino-acid chain: L-aspartate dehydrogenase (271 aa).

2 residues coordinate NAD(+): Ala-124 and Asn-192. The active site involves His-222.

The protein belongs to the L-aspartate dehydrogenase family.

The catalysed reaction is L-aspartate + NADP(+) + H2O = oxaloacetate + NH4(+) + NADPH + H(+). It catalyses the reaction L-aspartate + NAD(+) + H2O = oxaloacetate + NH4(+) + NADH + H(+). It participates in cofactor biosynthesis; NAD(+) biosynthesis; iminoaspartate from L-aspartate (dehydrogenase route): step 1/1. In terms of biological role, specifically catalyzes the NAD or NADP-dependent dehydrogenation of L-aspartate to iminoaspartate. This is L-aspartate dehydrogenase from Methanosarcina barkeri (strain Fusaro / DSM 804).